Reading from the N-terminus, the 196-residue chain is Agamous-like MADS-box protein AGL27 (196 aa).

Positions 1 to 61 (MGRRKIEIKR…GKLYDSSSGD (61 aa)) constitute an MADS-box domain. Residues 80–170 (ALDLEEKIQN…ASQMGKNTLL (91 aa)) form the K-box domain. The segment at 175-196 (ERGMFPGSSSGNKIPETLPLLN) is disordered.

In terms of assembly, interacts with AGL39, AGL97 and AGL74. In terms of tissue distribution, expressed in most plant tissues, embryo, seedlings, roots, leaves, stems, inflorescence, pollen, siliques and flowers.

The protein resides in the nucleus. Probable transcription factor involved in the negative regulation of flowering time in both long and short days, probably through the photoperiodic and vernalization pathways. Prevents premature flowering. This is Agamous-like MADS-box protein AGL27 (AGL27) from Arabidopsis thaliana (Mouse-ear cress).